The sequence spans 300 residues: Alpha-tubulin N-acetyltransferase 1 (300 aa).

In terms of domain architecture, N-acetyltransferase spans 1–190 (MEFPFDVDAL…NNFVIFEGFF (190 aa)). Lys-56 carries the post-translational modification N6-acetyllysine; by autocatalysis. 124-137 (FYIHESLQRHGHGR) is a binding site for acetyl-CoA. Lys-146 bears the N6-acetyllysine; by autocatalysis mark. 160-169 (SQKLLKFLNK) serves as a coordination point for acetyl-CoA. Residues Lys-210 and Lys-221 each carry the N6-acetyllysine; by autocatalysis modification. Disordered regions lie at residues 229-263 (PLNR…RPFV) and 280-300 (TARL…RRTR). Ser-249 and Ser-253 each carry phosphoserine. Residue Arg-282 is modified to Asymmetric dimethylarginine. Ser-292 carries the phosphoserine modification. Arg-300 bears the Omega-N-methylarginine mark.

It belongs to the acetyltransferase ATAT1 family. As to quaternary structure, component of the BBSome complex. Interacts with AP2 alpha-adaptins, including AP2A2, but not with AP1 gamma-adaptin (AP1G1/AP1G2); this interaction is required for efficient alpha-tubulin acetylation, hence clathrin-coated pits are sites of microtubule acetylation. In terms of processing, autoacetylation strongly increases tubulin acetylation.

Its subcellular location is the cytoplasm. The protein resides in the membrane. The protein localises to the clathrin-coated pit. It localises to the cell junction. It is found in the focal adhesion. Its subcellular location is the cell projection. The protein resides in the axon. The protein localises to the cytoskeleton. It localises to the spindle. It carries out the reaction L-lysyl-[alpha-tubulin] + acetyl-CoA = N(6)-acetyl-L-lysyl-[alpha-tubulin] + CoA + H(+). Functionally, specifically acetylates 'Lys-40' in alpha-tubulin on the lumenal side of microtubules. Promotes microtubule destabilization and accelerates microtubule dynamics; this activity may be independent of acetylation activity. Acetylates alpha-tubulin with a slow enzymatic rate, due to a catalytic site that is not optimized for acetyl transfer. Enters the microtubule through each end and diffuses quickly throughout the lumen of microtubules. Acetylates only long/old microtubules because of its slow acetylation rate since it does not have time to act on dynamically unstable microtubules before the enzyme is released. Required for normal sperm flagellar function. Promotes directional cell locomotion and chemotaxis, through AP2A2-dependent acetylation of alpha-tubulin at clathrin-coated pits that are concentrated at the leading edge of migrating cells. May facilitate primary cilium assembly. The polypeptide is Alpha-tubulin N-acetyltransferase 1 (Sus scrofa (Pig)).